Here is a 685-residue protein sequence, read N- to C-terminus: T-box transcription factor TBX2 (685 aa).

The T-box DNA-binding region spans 104–277 (LWDQFHKLGT…NNPFAKGFRD (174 aa)). Disordered regions lie at residues 270-433 (PFAK…CGSL) and 606-660 (NLLT…SINE). 4 stretches are compositionally biased toward basic and acidic residues: residues 296–308 (MYEE…RDGA), 340–361 (SNRE…EVRT), 378–403 (RLED…KDGG), and 410–428 (SLEK…KSDP). A compositionally biased stretch (polar residues) spans 606-617 (NLLTTGLSASLN). A compositionally biased stretch (low complexity) spans 618 to 633 (PGSESSKPGSSRESSP). Residues 652 to 676 (ASMKDSINELQNIQRLVSGLESQRE) adopt a coiled-coil conformation.

In terms of assembly, binds DNA as a monomer.

The protein resides in the nucleus. In terms of biological role, transcription factor which acts as a transcriptional repressor. May also function as a transcriptional activator. Binds to the palindromic T site 5'-TTCACACCTAGGTGTGAA-3' DNA sequence, or a half-site, which are present in the regulatory region of several genes. The chain is T-box transcription factor TBX2 (tbx2) from Xenopus tropicalis (Western clawed frog).